The chain runs to 299 residues: Neomycin C epimerase (299 aa).

The Radical SAM core domain maps to 10–222 (PVRQVRAYRN…WNHIFETGRR (213 aa)). Positions 26, 30, 33, 226, and 247 each coordinate [4Fe-4S] cluster. Catalysis depends on Cys249, which acts as the Proton donor. [4Fe-4S] cluster-binding residues include Cys271 and Cys274.

The protein belongs to the radical SAM superfamily. [4Fe-4S] cluster serves as cofactor.

The catalysed reaction is neomycin C + AH2 + S-adenosyl-L-methionine = neomycin B + 5'-deoxyadenosine + L-methionine + A + H(+). The protein operates within antibiotic biosynthesis; neomycin biosynthesis. In terms of biological role, catalyzes the last step of neomycin B biosynthesis, i.e. the irreversible epimerization at C-5''' of neomycin C to give neomycin B. To a lesser extent, is also able to convert neomycin Y2 to neomycin Y1. This chain is Neomycin C epimerase, found in Streptomyces fradiae (Streptomyces roseoflavus).